Reading from the N-terminus, the 300-residue chain is Succinate--CoA ligase [ADP-forming] subunit alpha (300 aa).

Residues 17-20 (TGST), Lys-43, and 96-98 (ITE) each bind CoA. A substrate-binding site is contributed by Tyr-159. The Tele-phosphohistidine intermediate role is filled by His-247.

This sequence belongs to the succinate/malate CoA ligase alpha subunit family. Heterotetramer of two alpha and two beta subunits.

It carries out the reaction succinate + ATP + CoA = succinyl-CoA + ADP + phosphate. The enzyme catalyses GTP + succinate + CoA = succinyl-CoA + GDP + phosphate. Its pathway is carbohydrate metabolism; tricarboxylic acid cycle; succinate from succinyl-CoA (ligase route): step 1/1. In terms of biological role, succinyl-CoA synthetase functions in the citric acid cycle (TCA), coupling the hydrolysis of succinyl-CoA to the synthesis of either ATP or GTP and thus represents the only step of substrate-level phosphorylation in the TCA. The alpha subunit of the enzyme binds the substrates coenzyme A and phosphate, while succinate binding and nucleotide specificity is provided by the beta subunit. This is Succinate--CoA ligase [ADP-forming] subunit alpha from Bacillus subtilis (strain 168).